A 175-amino-acid chain; its full sequence is Cytochrome c homolog (175 aa).

Residues 1–8 (MSGKELNK) lie on the Cytoplasmic side of the membrane. A helical; Signal-anchor membrane pass occupies residues 9-29 (IVAAILFASLIAMMVGFVANI). At 30–175 (LYKPTLELQH…LFLKTYVHDK (146 aa)) the chain is on the periplasmic side. Heme c is bound by residues C84, C87, H88, and M150.

It belongs to the cytochrome c family. Binds 1 heme c group covalently per subunit.

The protein localises to the cell membrane. Functionally, may be involved in electron transfer from bc1 complex to aa3. This is Cytochrome c homolog (cycM) from Rickettsia conorii (strain ATCC VR-613 / Malish 7).